Here is a 357-residue protein sequence, read N- to C-terminus: MTYVSLADLERAARDVLPGEIFDFLAGGSGTEASLVANRTALERVFVIPRMLRDLTDVTTEIDIFGRRAALPMAVAPVAYQRLFHPEGELAVARAARDAGVPYTICTLSSVSLEEIAAVGGRPWFQLYWLRDEKRSLDLVRRAEDAGCEAIVFTVDVPWMGRRLRDMRNGFALPEWVTAANFDAGTAAHRRTQGVSAVADHTAREFAPATWESVEAVRAHTDLPVVLKGILAVEDARRAVDAGAGGIVVSNHGGRQLDGAVPGIEMLGEIVAAVSGGCEVLVDGGIRSGGDVLKATALGASAVLVGRPVMWALAAAGQDGVRQLLELLAEEVRDAMGLAGCESVGAARRLNTKLGVV.

The FMN hydroxy acid dehydrogenase domain maps to 1-357 (MTYVSLADLE…RRLNTKLGVV (357 aa)). Glutamine 126 provides a ligand contact to FMN. Residue tyrosine 128 participates in a 2-oxocarboxylate binding. Threonine 154 is a binding site for FMN. Arginine 163 contributes to the a 2-oxocarboxylate binding site. Lysine 228 is a binding site for FMN. Residue histidine 252 is the Proton acceptor of the active site. Arginine 255 contacts a 2-oxocarboxylate. FMN contacts are provided by residues 283-287 (DGGIR) and 306-307 (GR).

It belongs to the FMN-dependent alpha-hydroxy acid dehydrogenase family. Requires FMN as cofactor.

It catalyses the reaction (S)-4-hydroxymandelate + O2 = 4-hydroxyphenylglyoxylate + H2O2. It functions in the pathway antibiotic biosynthesis; vancomycin biosynthesis. In terms of biological role, catalyzes the oxidation of p-hydroxymandelate to p-hydroxybenzoylformate in the biosynthesis of L-(4-hydroxyphenyl)glycine and L-(3,5-dihydroxyphenyl)glycine, 2 non-proteinogenic amino acids occurring in the vancomycin group of antibiotics. The protein is 4-hydroxymandelate oxidase (hmo) of Amycolatopsis orientalis (Nocardia orientalis).